The sequence spans 156 residues: Arginine repressor (156 aa).

This sequence belongs to the ArgR family.

The protein resides in the cytoplasm. It functions in the pathway amino-acid biosynthesis; L-arginine biosynthesis [regulation]. Functionally, regulates arginine biosynthesis genes. The protein is Arginine repressor of Shewanella loihica (strain ATCC BAA-1088 / PV-4).